The sequence spans 191 residues: MEYFDIRKMPVNLWRNGAGETREICCFPPATRDFHWRASIASIATNGEFARFPGMERVVTLLEGGEIHLESTDSFSHTLKQLQPFAFSGEQIVKAQLNEGQMSMDFNIMTRCNSCKAKVRIADRTFTTFGSRGGVVFVISGIWQLGDKVLTTDQGACWYDGKHTLRLLQSTGKLLFSEINWLPGYSPDQVQ.

This sequence belongs to the Ves family.

The protein is Protein Ves of Escherichia fergusonii (strain ATCC 35469 / DSM 13698 / CCUG 18766 / IAM 14443 / JCM 21226 / LMG 7866 / NBRC 102419 / NCTC 12128 / CDC 0568-73).